We begin with the raw amino-acid sequence, 559 residues long: Apolipoprotein N-acyltransferase 2 (559 aa).

A run of 6 helical transmembrane segments spans residues 27-47 (LAGS…GFLL), 53-73 (HVAC…SFWL), 86-106 (ASTV…ACIL), 114-134 (ACAF…GILA), 153-173 (IADI…NACV), and 187-207 (VPVF…SLYG). The CN hydrolase domain maps to 221–507 (LALAIVQQNA…SAVLHVPVYP (287 aa)). The active-site Proton acceptor is E288. Residue K358 is part of the active site. The Nucleophile role is filled by C416. A helical transmembrane segment spans residues 519-539 (WVIVLCALIFFAEGVRMAVHT).

It belongs to the CN hydrolase family. Apolipoprotein N-acyltransferase subfamily.

The protein resides in the cell inner membrane. It catalyses the reaction N-terminal S-1,2-diacyl-sn-glyceryl-L-cysteinyl-[lipoprotein] + a glycerophospholipid = N-acyl-S-1,2-diacyl-sn-glyceryl-L-cysteinyl-[lipoprotein] + a 2-acyl-sn-glycero-3-phospholipid + H(+). The protein operates within protein modification; lipoprotein biosynthesis (N-acyl transfer). Its function is as follows. Catalyzes the phospholipid dependent N-acylation of the N-terminal cysteine of apolipoprotein, the last step in lipoprotein maturation. This chain is Apolipoprotein N-acyltransferase 2, found in Treponema pallidum (strain Nichols).